Here is a 216-residue protein sequence, read N- to C-terminus: Ribonuclease HII (216 aa).

Residues 28 to 216 (ACIAGIDEAG…GVKEYVRSEE (189 aa)) form the RNase H type-2 domain. The a divalent metal cation site is built by Asp-34, Glu-35, and Asp-126.

Belongs to the RNase HII family. Mn(2+) is required as a cofactor. Requires Mg(2+) as cofactor.

It localises to the cytoplasm. The catalysed reaction is Endonucleolytic cleavage to 5'-phosphomonoester.. In terms of biological role, endonuclease that specifically degrades the RNA of RNA-DNA hybrids. The polypeptide is Ribonuclease HII (Geotalea uraniireducens (strain Rf4) (Geobacter uraniireducens)).